Reading from the N-terminus, the 252-residue chain is Triosephosphate isomerase (252 aa).

10–12 contributes to the substrate binding site; the sequence is NWK. Histidine 96 (electrophile) is an active-site residue. Residue glutamate 168 is the Proton acceptor of the active site. Residues glycine 174, serine 214, and 235–236 contribute to the substrate site; that span reads GG.

It belongs to the triosephosphate isomerase family. Homodimer.

The protein localises to the cytoplasm. It carries out the reaction D-glyceraldehyde 3-phosphate = dihydroxyacetone phosphate. The protein operates within carbohydrate biosynthesis; gluconeogenesis. Its pathway is carbohydrate degradation; glycolysis; D-glyceraldehyde 3-phosphate from glycerone phosphate: step 1/1. In terms of biological role, involved in the gluconeogenesis. Catalyzes stereospecifically the conversion of dihydroxyacetone phosphate (DHAP) to D-glyceraldehyde-3-phosphate (G3P). The chain is Triosephosphate isomerase from Lactococcus lactis subsp. cremoris (strain MG1363).